We begin with the raw amino-acid sequence, 192 residues long: Fibroblast growth factor 4B (192 aa).

Residues M1–C22 form the signal peptide.

The protein belongs to the heparin-binding growth factors family.

Its subcellular location is the secreted. Plays an important role in the regulation of embryonic development, cell proliferation, and cell differentiation. Good candidate for an inducing factor with possible roles both in mesoderm induction at the blastula stage and in the formation of the anteroposterior axis at the gastrula stage. This chain is Fibroblast growth factor 4B (fgf4-b), found in Xenopus laevis (African clawed frog).